A 331-amino-acid chain; its full sequence is Large ribosomal subunit protein uL3 (331 aa).

The protein belongs to the universal ribosomal protein uL3 family. Part of the 50S ribosomal subunit. Forms a cluster with proteins L14 and L24e.

In terms of biological role, one of the primary rRNA binding proteins, it binds directly near the 3'-end of the 23S rRNA, where it nucleates assembly of the 50S subunit. This Thermoplasma acidophilum (strain ATCC 25905 / DSM 1728 / JCM 9062 / NBRC 15155 / AMRC-C165) protein is Large ribosomal subunit protein uL3.